A 165-amino-acid polypeptide reads, in one-letter code: Lymphocyte antigen 6K (165 aa).

A signal peptide spans 1–17 (MALLALLLVVALPRVWT). Residue Asn-20 is glycosylated (N-linked (GlcNAc...) asparagine). Residues 47 to 141 (ERENTFECQN…VFKEYAGSMG (95 aa)) form the UPAR/Ly6 domain. Gly-138 is lipidated: GPI-anchor amidated glycine. Positions 139–165 (SMGESCGGLWLAILLLLASIAAGLSLS) are cleaved as a propeptide — removed in mature form.

As to quaternary structure, interacts with TEX101. As to expression, specifically expressed in testis (at protein level).

The protein localises to the secreted. The protein resides in the cytoplasm. It localises to the cell membrane. It is found in the cytoplasmic vesicle. Its subcellular location is the secretory vesicle. The protein localises to the acrosome. The protein resides in the membrane raft. Its function is as follows. Required for sperm migration into the oviduct and male fertility by controlling binding of sperm to zona pellucida. May play a role in cell growth. This is Lymphocyte antigen 6K from Homo sapiens (Human).